Reading from the N-terminus, the 307-residue chain is Protein phosphatase EYA (307 aa).

Positions 1 to 15 are necessary for optimum phosphatase activity; sequence MNNDTSKKLGTLVSD. Asp25 acts as the Nucleophile in catalysis. Mg(2+)-binding residues include Asp25, Asp27, and Asp253. The active-site Proton donor is the Asp27.

The protein belongs to the HAD-like hydrolase superfamily. EYA family. Requires Mg(2+) as cofactor.

It carries out the reaction O-phospho-L-tyrosyl-[protein] + H2O = L-tyrosyl-[protein] + phosphate. Its activity is regulated as follows. Inhibited by EDTA. Possesses phosphatase activity toward para-nitrophenyl phosphate (pNPP) in vitro. Possesses phosphatase activity toward several phosphotyrosine-containing peptides in vitro, with low peptide substrate specificity. The sequence is that of Protein phosphatase EYA from Arabidopsis thaliana (Mouse-ear cress).